Here is a 404-residue protein sequence, read N- to C-terminus: MKYTEIMVRYGELSTKGKNRKTFIMQLAQNVKRALADFPALKIHADRDRMHILLNGEDSEEVIPKLSKVFGIQNFSPSIRIEKEMPAIRAMVQEVVREVYTPGKTFKITAKRSDHSFELDSNGLNQELGGAVIEAIPEIQVQMKKPDINLRIEIRKDAAYLSYETIRGAGGLPVGTSGRGMLMLSGGIDSPVAGYLAMKRGVEVEAVHFASPPYTSEQALQKAKDLAEKLVPYVGTIQFIEVPFTEIQEEIKRVVPQGYLMTITRRLMLRLTDAIREMRKGLVIINGESLAQVASQTLQSMVAINEVTSTPIIRPVVSMDKTEIIEIAEKIDTFELAIQPFEDCCTIFAPPQPKTRPRLDKAQEYEARLDLEGLMARALEGLKITEISAETAKDKQEDEFADFL.

The region spanning 60–165 (EEVIPKLSKV…KDAAYLSYET (106 aa)) is the THUMP domain. ATP is bound by residues 183–184 (ML), 208–209 (HF), Arg265, Gly287, and Gln296.

Belongs to the ThiI family.

The protein resides in the cytoplasm. The enzyme catalyses [ThiI sulfur-carrier protein]-S-sulfanyl-L-cysteine + a uridine in tRNA + 2 reduced [2Fe-2S]-[ferredoxin] + ATP + H(+) = [ThiI sulfur-carrier protein]-L-cysteine + a 4-thiouridine in tRNA + 2 oxidized [2Fe-2S]-[ferredoxin] + AMP + diphosphate. It carries out the reaction [ThiS sulfur-carrier protein]-C-terminal Gly-Gly-AMP + S-sulfanyl-L-cysteinyl-[cysteine desulfurase] + AH2 = [ThiS sulfur-carrier protein]-C-terminal-Gly-aminoethanethioate + L-cysteinyl-[cysteine desulfurase] + A + AMP + 2 H(+). It functions in the pathway cofactor biosynthesis; thiamine diphosphate biosynthesis. Catalyzes the ATP-dependent transfer of a sulfur to tRNA to produce 4-thiouridine in position 8 of tRNAs, which functions as a near-UV photosensor. Also catalyzes the transfer of sulfur to the sulfur carrier protein ThiS, forming ThiS-thiocarboxylate. This is a step in the synthesis of thiazole, in the thiamine biosynthesis pathway. The sulfur is donated as persulfide by IscS. The protein is Probable tRNA sulfurtransferase of Enterococcus faecalis (strain ATCC 700802 / V583).